Here is a 304-residue protein sequence, read N- to C-terminus: Calcium release-activated calcium channel protein 1 (304 aa).

The segment covering 1-11 (MHPEPAPPPSH) has biased composition (pro residues). The tract at residues 1–50 (MHPEPAPPPSHSNPELPVSGGSSTSGSRRSRRRSGDGEPSGAPPLPPPPP) is disordered. Residues 1 to 89 (MHPEPAPPPS…KLYLSRAKLK (89 aa)) are Cytoplasmic-facing. The segment at 3–49 (PEPAPPPSHSNPELPVSGGSSTSGSRRSRRRSGDGEPSGAPPLPPPP) is required for generation of inwardly rectifying CRAC currents. Residues 12-27 (SNPELPVSGGSSTSGS) show a composition bias toward low complexity. The tract at residues 39–61 (PSGAPPLPPPPPAVSYPDWIGQS) is AKAP5 association region. Positions 41-50 (GAPPLPPPPP) are enriched in pro residues. The interaction with STIM1 stretch occupies residues 72 to 92 (SMQALSWRKLYLSRAKLKASS). Residues 90 to 107 (ASSRTSALLSGFAMVAMV) form a helical membrane-spanning segment. Topologically, residues 108–121 (EVQLDTDHDYPPGL) are extracellular. A helical transmembrane segment spans residues 122–142 (LIVFSACTTVLVAVHLFALMI). Residues 143–175 (STCILPNIEAVSNVHNLNSVKESPHERMHRHIE) are Cytoplasmic-facing. The helical transmembrane segment at 176-196 (LAWAFSTVIGTLLFLAEVVLL) threads the bilayer. Residues 197–237 (CWVKFLPLKRQAGQPSPTKPPAESVIVANHSDSSGITPGEA) are Extracellular-facing. Asparagine 225 carries an N-linked (GlcNAc...) asparagine glycan. Residues 238–258 (AAIASTAIMVPCGLVFIVFAV) form a helical membrane-spanning segment. Over 259–304 (HFYRSLVSHKTDRQFQELNELAEFARLQDQLDHRGDHSLTPGTHYA) the chain is Cytoplasmic. Residues 275–295 (ELNELAEFARLQDQLDHRGDH) are interaction with STIM1. Residue threonine 298 is modified to Phosphothreonine.

This sequence belongs to the Orai family. Oligomerizes in homomeric and heteromeric ORAI complexes. Native CRAC channels most likely consist of hexameric ORAI heteromers, implying that diverse ORAI1, ORAI2 and ORAI3 subunit combinations with distinct biophysical properties can operate in a cell-type specific way. ARC channels are heteropentamers consisting of three ORAI1 and two ORAI3 subunits. Interacts with STIM1 and STIM2; this regulates channel activity. Interacts with CALM; this may displace STIM1 and STIM2 and might thereby modulate channel activity. Interacts (via N-terminus) with AKAP5 upon store depletion. Interacts with CRACR2A/EFCAB4B; the interaction is direct and takes place in absence of Ca(2+). Forms a complex with CRACR2A/EFCAB4B and STIM1 at low concentration of Ca(2+), the complex dissociates at elevated Ca(2+) concentrations. Interacts with ASPH (isoform 8). Interacts with SLC35G1. Interacts with UBQLN1. Interacts with ADCY8; interaction is calcium store depletion independent; interaction occurs in membrane raft; interaction increases markedly after store depletion; positively regulates SOCE-induced adenylate cyclase activity; contributes to the targeting of ADCY8 to discrete regions of the plasma membrane that are shielded from other calcium events. Interacts with EFHB; the interaction takes place upon Ca(2+)-store depletion. Interacts (via N- and C-termini) with ATP2C2 (via N-terminus); this interaction regulates Ca(2+) influx at the plasma membrane. Interacts with TSPAN18; this interaction regulates ORAI1 exit from the endoplasmic (ER), and/or Golgi, and trafficking to the cell surface. Post-translationally, N-glycosylated. N-glycosylation inhibits channel activity in T cells. Ubiquitinated. In terms of processing, cys-195 is oxidated, leading to inactivation of channel activity. As to expression, expressed in lactating mammary epithelium (at protein level).

It localises to the cell membrane. Its subcellular location is the basolateral cell membrane. It catalyses the reaction Ca(2+)(in) = Ca(2+)(out). Its activity is regulated as follows. Oxidation at Cys-197 leads to inactivation of channel activity. In terms of biological role, pore-forming subunit of two major inward rectifying Ca(2+) channels at the plasma membrane: Ca(2+) release-activated Ca(2+) (CRAC) channels and arachidonate-regulated Ca(2+)-selective (ARC) channels. Assembles with ORAI2 and ORAI3 to form hexameric CRAC channels that mediate Ca(2+) influx upon depletion of endoplasmic reticulum Ca(2+) store and channel activation by Ca(2+) sensor STIM1, a process known as store-operated Ca(2+) entry (SOCE). Various pore subunit combinations may account for distinct CRAC channel spatiotemporal and cell-type specific dynamics. ORAI1 mainly contributes to the generation of Ca(2+) plateaus involved in sustained Ca(2+) entry and is dispensable for cytosolic Ca(2+) oscillations, whereas ORAI2 and ORAI3 generate oscillatory patterns. CRAC channels assemble in Ca(2+) signaling microdomains where Ca(2+) influx is coupled to calmodulin and calcineurin signaling and activation of NFAT transcription factors recruited to ORAI1 via AKAP5. Activates NFATC2/NFAT1 and NFATC3/NFAT4-mediated transcriptional responses. CRAC channels are the main pathway for Ca(2+) influx in T cells and promote the immune response to pathogens by activating NFAT-dependent cytokine and chemokine transcription. Assembles with ORAI3 to form channels that mediate store-independent Ca(2+) influx in response to inflammatory metabolites arachidonate or its derivative leukotriene C4, termed ARC and LRC channels respectively. Plays a prominent role in Ca(2+) influx at the basolateral membrane of mammary epithelial cells independently of the Ca(2+) content of endoplasmic reticulum or Golgi stores. May mediate transepithelial transport of large quantities of Ca(2+) for milk secretion. The protein is Calcium release-activated calcium channel protein 1 (Orai1) of Mus musculus (Mouse).